The sequence spans 219 residues: Probable glucosamine 6-phosphate N-acetyltransferase (219 aa).

The N-acetyltransferase domain maps to 42-198; the sequence is MKVRPLKDTD…EGPTLKRNAT (157 aa). Substrate is bound by residues T64, 111–114, and 123–125; these read KFIH and EDV. 133-138 contributes to the acetyl-CoA binding site; the sequence is GKQLGK. Substrate is bound by residues 154-155 and R186; that span reads YK.

It belongs to the acetyltransferase family. GNA1 subfamily.

It catalyses the reaction D-glucosamine 6-phosphate + acetyl-CoA = N-acetyl-D-glucosamine 6-phosphate + CoA + H(+). The protein operates within nucleotide-sugar biosynthesis; UDP-N-acetyl-alpha-D-glucosamine biosynthesis; N-acetyl-alpha-D-glucosamine 1-phosphate from alpha-D-glucosamine 6-phosphate (route I): step 1/2. The chain is Probable glucosamine 6-phosphate N-acetyltransferase from Drosophila melanogaster (Fruit fly).